The following is a 480-amino-acid chain: Pyruvate kinase (480 aa).

Residue R36 participates in substrate binding. K(+)-binding residues include N38, S40, and D70. Position 38–41 (38–41 (NFSH)) interacts with ATP. Residues R77 and K160 each contribute to the ATP site. A Mg(2+)-binding site is contributed by E225. Residues G251, D252, and T284 each contribute to the substrate site. D252 contributes to the Mg(2+) binding site.

This sequence belongs to the pyruvate kinase family. As to quaternary structure, homotetramer. Mg(2+) serves as cofactor. It depends on K(+) as a cofactor.

The catalysed reaction is pyruvate + ATP = phosphoenolpyruvate + ADP + H(+). The protein operates within carbohydrate degradation; glycolysis; pyruvate from D-glyceraldehyde 3-phosphate: step 5/5. Its activity is regulated as follows. Allosterically activated by AMP and by several sugar phosphates. Belongs to type II PK. This chain is Pyruvate kinase (pykA), found in Buchnera aphidicola subsp. Acyrthosiphon pisum (strain APS) (Acyrthosiphon pisum symbiotic bacterium).